The chain runs to 394 residues: Probable malate--CoA ligase subunit beta (394 aa).

One can recognise an ATP-grasp domain in the interval K9–F244. The ATP site is built by K46, E99, V102, and E107. Positions 199 and 213 each coordinate Mg(2+).

Belongs to the succinate/malate CoA ligase beta subunit family. Heterotetramer of two alpha and two beta subunits. Mg(2+) is required as a cofactor.

The enzyme catalyses (S)-malate + ATP + CoA = (S)-malyl-CoA + ADP + phosphate. It functions in the pathway one-carbon metabolism; formaldehyde assimilation via serine pathway. This is Probable malate--CoA ligase subunit beta (mtkA) from Mesorhizobium japonicum (strain LMG 29417 / CECT 9101 / MAFF 303099) (Mesorhizobium loti (strain MAFF 303099)).